The primary structure comprises 98 residues: Small ribosomal subunit protein uS19 (98 aa).

It belongs to the universal ribosomal protein uS19 family.

In terms of biological role, protein S19 forms a complex with S13 that binds strongly to the 16S ribosomal RNA. The protein is Small ribosomal subunit protein uS19 of Chlorobaculum tepidum (strain ATCC 49652 / DSM 12025 / NBRC 103806 / TLS) (Chlorobium tepidum).